Here is a 768-residue protein sequence, read N- to C-terminus: Levansucrase (768 aa).

Residues 1-36 (MLENKKHKKMSLSGKSLLMGTLSTAAIVLSASTVNA) form the signal peptide. Polar residues-rich tracts occupy residues 57-68 (SASVNKNDNSGL), 80-99 (TETN…SQVN), 106-134 (SSTQ…QDSD), and 143-153 (NNSQGQSSTSS). The segment at 57–158 (SASVNKNDNS…SSTSSEKTEL (102 aa)) is disordered. The sucrose site is built by tryptophan 250, aspartate 251, and serine 320. Aspartate 251 functions as the Nucleophile in the catalytic mechanism. Residue aspartate 398 coordinates Ca(2+). Sucrose is bound by residues arginine 403 and aspartate 404. Glutamine 429, asparagine 468, and aspartate 502 together coordinate Ca(2+). Glutamate 503 contacts sucrose. Glutamate 505 serves as the catalytic Proton donor/acceptor. Arginine 523 lines the sucrose pocket. Residues 688–736 (HQPVTPNVPTTPEKPENPTTPNTPDTPRTPEVPTTPVKKTTQSELPKAG) are disordered. The segment covering 691 to 727 (VTPNVPTTPEKPENPTTPNTPDTPRTPEVPTTPVKKT) has biased composition (low complexity). The short motif at 732 to 736 (LPKAG) is the LPXTG sorting signal element. Alanine 735 carries the post-translational modification Pentaglycyl murein peptidoglycan amidated alanine. Residues 736-768 (GAKDGIAATILGAISSMLGVIGLAGISKRKRNN) constitute a propeptide, removed by sortase.

Belongs to the glycosyl hydrolase 68 family.

Its subcellular location is the secreted. It is found in the cell wall. The protein resides in the cell surface. It catalyses the reaction [6)-beta-D-fructofuranosyl-(2-&gt;](n) alpha-D-glucopyranoside + sucrose = [6)-beta-D-fructofuranosyl-(2-&gt;](n+1) alpha-D-glucopyranoside + D-glucose. With respect to regulation, calcium ions are required for optimal activity, but do not seem to be essential since addition of EDTA causes only a 48% drop in activity. Ca(2+) may play an important structural role and promote stability of levansucrase. In terms of biological role, fructosyltransferase that catalyzes the polymerization of the fructose moiety of sucrose to produce levan polymer and the fructo-oligosaccharide (FOS) 1-kestose. Is also able to convert raffinose into a fructan polymer and a single oligosaccharide (most likely Gal-Glc-Frc-Frc) in vitro; however, L.gasseri strain DSM 20077 is unable to ferment raffinose. Also displays sucrose hydrolase activity. The polypeptide is Levansucrase (Lactobacillus gasseri).